The chain runs to 48 residues: Small, acid-soluble spore protein O (48 aa).

The tract at residues 1–48 (MAKRKANHVINGMNNAKRQGNGAGYIENDQHILTEAERQNNKKRKTNQ) is disordered. Residues 28–40 (NDQHILTEAERQN) show a composition bias toward basic and acidic residues.

The protein belongs to the SspO family.

It localises to the spore core. In Bacillus licheniformis (strain ATCC 14580 / DSM 13 / JCM 2505 / CCUG 7422 / NBRC 12200 / NCIMB 9375 / NCTC 10341 / NRRL NRS-1264 / Gibson 46), this protein is Small, acid-soluble spore protein O.